The following is a 437-amino-acid chain: Adenylosuccinate synthetase (437 aa).

GTP-binding positions include 12-18 (GDEGKGK) and 40-42 (GHT). The active-site Proton acceptor is aspartate 13. Aspartate 13 and glycine 40 together coordinate Mg(2+). IMP-binding positions include 13-16 (DEGK), 38-41 (NAGH), threonine 128, arginine 142, glutamine 223, threonine 238, and arginine 302. Histidine 41 serves as the catalytic Proton donor. The interval 119–138 (QRGERRIGTTGRGIGPTYAD) is disordered. 298–304 (TTTGRRR) contacts substrate. Residues arginine 304, 330–332 (KLD), and 412–414 (SLG) each bind GTP.

The protein belongs to the adenylosuccinate synthetase family. Homodimer. Mg(2+) is required as a cofactor.

It localises to the cytoplasm. It catalyses the reaction IMP + L-aspartate + GTP = N(6)-(1,2-dicarboxyethyl)-AMP + GDP + phosphate + 2 H(+). The protein operates within purine metabolism; AMP biosynthesis via de novo pathway; AMP from IMP: step 1/2. Its function is as follows. Plays an important role in the de novo pathway of purine nucleotide biosynthesis. Catalyzes the first committed step in the biosynthesis of AMP from IMP. The polypeptide is Adenylosuccinate synthetase (Synechococcus sp. (strain WH7803)).